Consider the following 164-residue polypeptide: R-phycoerythrin alpha chain (164 aa).

The (2R,3E)-phycoerythrobilin site is built by Cys82 and Cys139.

This sequence belongs to the phycobiliprotein family. Heterodimer of an alpha and a beta chain. Post-translationally, contains two covalently linked bilin chromophores.

It is found in the plastid. The protein localises to the chloroplast thylakoid membrane. In terms of biological role, light-harvesting photosynthetic bile pigment-protein from the phycobiliprotein complex. The protein is R-phycoerythrin alpha chain (cpeA) of Lophosiphonia boldii (Red alga).